The following is a 640-amino-acid chain: Asparagine synthetase domain-containing protein 1 (640 aa).

Catalysis depends on Cys-2, which acts as the For GATase activity. A Glutamine amidotransferase type-2 domain is found at 2-184; the sequence is CGICCAVSFS…ASGIFRIDLK (183 aa). Residues 286–602 form the Asparagine synthetase domain; it reads QFIGVLSTAV…GLTASALLPK (317 aa).

The chain is Asparagine synthetase domain-containing protein 1 (ASNSD1) from Bos taurus (Bovine).